Consider the following 147-residue polypeptide: Myoglobin (147 aa).

Residues 2-141 (HDAELVLKCW…VIGDIDTYYK (140 aa)) enclose the Globin domain. Position 60 (histidine 60) interacts with nitrite. An O2-binding site is contributed by histidine 60. Histidine 89 provides a ligand contact to heme b.

This sequence belongs to the globin family. In terms of assembly, monomeric.

It is found in the cytoplasm. The protein localises to the sarcoplasm. It carries out the reaction Fe(III)-heme b-[protein] + nitric oxide + H2O = Fe(II)-heme b-[protein] + nitrite + 2 H(+). It catalyses the reaction H2O2 + AH2 = A + 2 H2O. Its function is as follows. Monomeric heme protein which primary function is to store oxygen and facilitate its diffusion within muscle tissues. Reversibly binds oxygen through a pentacoordinated heme iron and enables its timely and efficient release as needed during periods of heightened demand. Depending on the oxidative conditions of tissues and cells, and in addition to its ability to bind oxygen, it also has a nitrite reductase activity whereby it regulates the production of bioactive nitric oxide. Under stress conditions, like hypoxia and anoxia, it also protects cells against reactive oxygen species thanks to its pseudoperoxidase activity. The sequence is that of Myoglobin (mb) from Cyprinus carpio (Common carp).